The following is a 104-amino-acid chain: Meiotically up-regulated gene 150 protein (104 aa).

3 helical membrane-spanning segments follow: residues 30-50 (FFLKNIIVLSNYLYLLYKAWI), 54-74 (TISLCCDFPLFNFLFIAIPYF), and 84-104 (LLWFLFVSLCFITLSFQSLEI).

The protein resides in the endoplasmic reticulum membrane. Functionally, has a role in meiosis. This chain is Meiotically up-regulated gene 150 protein (mug150), found in Schizosaccharomyces pombe (strain 972 / ATCC 24843) (Fission yeast).